Reading from the N-terminus, the 157-residue chain is uncharacterized protein (157 aa).

Positions 1–11 (MGDLEGQDRPD) are enriched in basic and acidic residues. Positions 1-22 (MGDLEGQDRPDPISTMVGPSGT) are disordered.

It localises to the mitochondrion. This is an uncharacterized protein from Arabidopsis thaliana (Mouse-ear cress).